The primary structure comprises 240 residues: Zinc import ATP-binding protein ZnuC (240 aa).

Residues 1–219 enclose the ABC transporter domain; sequence MSLLSIAALD…PAYRAMFGLD (219 aa). 36-43 contacts ATP; sequence GPNGSGKT.

The protein belongs to the ABC transporter superfamily. Zinc importer (TC 3.A.1.15.5) family. In terms of assembly, the complex is composed of two ATP-binding proteins (ZnuC), two transmembrane proteins (ZnuB) and a solute-binding protein (ZnuA).

It is found in the cell inner membrane. It catalyses the reaction Zn(2+)(out) + ATP(in) + H2O(in) = Zn(2+)(in) + ADP(in) + phosphate(in) + H(+)(in). Functionally, part of the ABC transporter complex ZnuABC involved in zinc import. Responsible for energy coupling to the transport system. The protein is Zinc import ATP-binding protein ZnuC of Chromohalobacter salexigens (strain ATCC BAA-138 / DSM 3043 / CIP 106854 / NCIMB 13768 / 1H11).